We begin with the raw amino-acid sequence, 128 residues long: Con-Ins F1 (128 aa).

Residues 1 to 24 (MTTSSYFLLVTLGLLLYVCRSSFG) form the signal peptide. 4 disulfide bridges follow: C29-C104, C41-C107, C53-C120, and C106-C111. Residues 59–89 (LQGGTGKKRGRASPLRKRRAFLSMLKARAKR) constitute a propeptide, c peptide. E115 is subject to 4-carboxyglutamate; partial. S127 bears the Serine amide mark.

This sequence belongs to the insulin family. As to quaternary structure, heterodimer of A and B chains; disulfide-linked. In terms of tissue distribution, expressed by the venom gland.

The protein localises to the secreted. Functionally, this venom insulin facilitates prey capture by rapidly inducing hypoglycemic shock. Intraperitoneal injection of this peptide into zebrafish lowers blood glucose with the same potency than human insulin. In vivo, when applied to water, this peptide reduces overall locomotor activity of zebrafish larvae, observed as a significant decrease in the percentage of time spent swimming and movement frequency. In Conus floridulus (Cone snail), this protein is Con-Ins F1.